The following is a 366-amino-acid chain: MAGNTFGQIFTVTTFGESHGAGLGCIIDGCPPGLELSEADIQFDLDRRKPGTSRHVTQRREADQVEILSGVFEGKTTGTPIALLIRNTDQRSKDYGNIATAFRPGHADYTYWHKYGTRDYRGGGRSSARETAARVAAGAVAKKWLKEKFGTEITAYVTQVGEKKIRFEGSEHISQNPFFAANQSQIAELEHYMDGVRKSLDSVGAKLHIEAANVPVGLGEPVFDRLDAEIAYAMMGINAVKGVEIGAGFDSVTQRGSEHGDELTPQGFLSNHSGGILGGISTGQDICVNIAIKPTSSIATPRRSIDIHGNPVELATRGRHDPCVGLRTAPIAEAMLALVLIDHALRHRAQNADVAADTPDISRSDK.

2 residues coordinate NADP(+): Arg-48 and Arg-54. FMN is bound by residues 125-127, 238-239, Gly-278, 293-297, and Arg-319; these read RSS, NA, and KPTSS.

It belongs to the chorismate synthase family. As to quaternary structure, homotetramer. The cofactor is FMNH2.

The catalysed reaction is 5-O-(1-carboxyvinyl)-3-phosphoshikimate = chorismate + phosphate. The protein operates within metabolic intermediate biosynthesis; chorismate biosynthesis; chorismate from D-erythrose 4-phosphate and phosphoenolpyruvate: step 7/7. Catalyzes the anti-1,4-elimination of the C-3 phosphate and the C-6 proR hydrogen from 5-enolpyruvylshikimate-3-phosphate (EPSP) to yield chorismate, which is the branch point compound that serves as the starting substrate for the three terminal pathways of aromatic amino acid biosynthesis. This reaction introduces a second double bond into the aromatic ring system. This Neisseria gonorrhoeae (strain ATCC 700825 / FA 1090) protein is Chorismate synthase.